A 458-amino-acid polypeptide reads, in one-letter code: Neuronal acetylcholine receptor subunit beta-3 (458 aa).

A signal peptide spans 1–21 (MLPDFMLVLIVLGIPSSATTG). Residues 22–237 (FNSIAENEDA…VLRRLPLFYT (216 aa)) lie on the Extracellular side of the membrane. N-linked (GlcNAc...) asparagine glycosylation is found at asparagine 51, asparagine 138, and asparagine 166. An intrachain disulfide couples cysteine 153 to cysteine 167. A run of 3 helical transmembrane segments spans residues 238-258 (LFLI…FYLP), 267-287 (LSTS…EIIP), and 300-320 (LLFI…VINV). Over 321-428 (HHRSSSTYHP…WKFVAQVLDR (108 aa)) the chain is Cytoplasmic. Residues 429–449 (IFLWLFLIVSVTGSVLIFTPA) traverse the membrane as a helical segment.

It belongs to the ligand-gated ion channel (TC 1.A.9) family. Acetylcholine receptor (TC 1.A.9.1) subfamily. Beta-3/CHRNB3 sub-subfamily. As to quaternary structure, neuronal AChR seems to be composed of two different type of subunits: alpha and beta. CHRNB3/beta-3 subunit is only able to form functional nAChRs when co-assembled with another beta subunit. Participates in pentameric assemblies along with CHRNA4/alpha-4 and CHRNB2/beta-2 subunits and with CHRNA6/alpha-6 as well, forming stoichiometries such as (CHRNA3:CHRNB4)2:CHRNB3, (CHRNA4:CHRNB2)2:CHRNB3 or (CHRNA6:CHRNB2)2:CHRNB3.

The protein localises to the synaptic cell membrane. Its subcellular location is the cell membrane. It carries out the reaction Ca(2+)(in) = Ca(2+)(out). It catalyses the reaction K(+)(in) = K(+)(out). The enzyme catalyses Na(+)(in) = Na(+)(out). Its activity is regulated as follows. Activated by a myriad of ligands such as acetylcholine, cytisine, nicotine, choline and epibatidine. Functionally, component of neuronal acetylcholine receptors (nAChRs) that function as pentameric, ligand-gated cation channels with high calcium permeability among other activities. nAChRs are excitatory neurotrasnmitter receptors formed by a collection of nAChR subunits known to mediate synaptic transmission in the nervous system and the neuromuscular junction. Each nAchR subunit confers differential attributes to channel properties, including activation, deactivation and desensitization kinetics, pH sensitivity, cation permeability, and binding to allosteric modulators. Has an accessory rather than functional role and is only able to form functional nAChRs when co-assembled with another beta subunit. Participates in pentameric assemblies along with CHRNA3, CHRNA4, CHRNA6, CHRNB2 and CHRNB4. Modulates receptor assembly and increases receptor sensitivity to nicotine when associated with CHRNB2, CHRNA4 and/or CHRNA6 as well as CHRNA3 and CHRNB4. Seems to play a role in nicotine addiction. The polypeptide is Neuronal acetylcholine receptor subunit beta-3 (Homo sapiens (Human)).